A 496-amino-acid chain; its full sequence is Probable cytosol aminopeptidase (496 aa).

The Mn(2+) site is built by lysine 257 and aspartate 262. Residue lysine 269 is part of the active site. Positions 281, 341, and 343 each coordinate Mn(2+). Arginine 345 is an active-site residue.

The protein belongs to the peptidase M17 family. The cofactor is Mn(2+).

It localises to the cytoplasm. It carries out the reaction Release of an N-terminal amino acid, Xaa-|-Yaa-, in which Xaa is preferably Leu, but may be other amino acids including Pro although not Arg or Lys, and Yaa may be Pro. Amino acid amides and methyl esters are also readily hydrolyzed, but rates on arylamides are exceedingly low.. It catalyses the reaction Release of an N-terminal amino acid, preferentially leucine, but not glutamic or aspartic acids.. In terms of biological role, presumably involved in the processing and regular turnover of intracellular proteins. Catalyzes the removal of unsubstituted N-terminal amino acids from various peptides. The polypeptide is Probable cytosol aminopeptidase (Prochlorococcus marinus (strain SARG / CCMP1375 / SS120)).